A 1095-amino-acid chain; its full sequence is MGNAGSMDSQQTDFRAHNVPLKLPMPEPGELEERFAIVLNAMNLPPDKARLLRQYDNEKKWELICDQERFQVKNPPHTYIQKLKGYLDPAVTRKKFRRRVQESTQVLRELEISLRTNHIGWVREFLNEENKGLDVLVEYLSFAQYAVTFDFESVESTVESSVDKSKPWSRSIEDLHRGSNLPSPVGNSVSRSGRHSALRYNTLPSRRTLKNSRLVSKKDDVHVCIMCLRAIMNYQYGFNMVMSHPHAVNEIALSLNNKNPRTKALVLELLAAVCLVRGGHEIILSAFDNFKEVCGEKQRFEKLMEHFRNEDNNIDFMVASMQFINIVVHSVEDMNFRVHLQYEFTKLGLDEYLDKLKHTESDKLQVQIQAYLDNVFDVGALLEDAETKNAALERVEELEENISHLSEKLQDTENEAMSKIVELEKQLMQRNKELDVVREIYKDANTQVHTLRKMVKEKEEAIQRQSTLEKKIHELEKQGTIKIQKKGDGDIAILPVVASGTLPTGSEVAVGNFVGPVMGAPSSGPLPPPPPPLPLSSDAPEAVQNGPATPPVPPPPPPPPPPPPPPPPPPPPPLPGPAAETLPAPPLPPPPPPSAPPLPGTSSPTVVFNSGLAAVKIKKPIKTKFRMPVFNWVALKPNQINGTVFNEIDDERILEDLNVDEFEEIFKTKAQGPAIDLSSSKQKITQKGSNKVTLLEANRAKNLAITLRKAGKTAEEICKAIHVFDLKTLPVDFVECLMRFLPTENEVKVLRLYERERKPLENLSDEDRFMMQFSKIERLMQKMTIMAFIGNFTESIQMLTPQLHSIIAASVSIKSSQKLKKILEIILALGNYMNSSKRGAVYGFKLQSLDLLLDTKSTDRKQTLLHYISNVVKEKYQQVSLFYNELHYVEKAAAVSLENVLLDVKELQRGMDLTKREYTMHDHNTLLKEFIFNNEGKLKKLQDDAKIAQDAFDDVVKYFGENPKTTPPSVFFPVFVRFVKAYKQAEEENELRKKQEQALMEKLLEQEALLEQQDPKSPSHKSKRQQQELIAELRRRQVKDNRHVYEGKDGAIEDIITALKKNNITKFPNVHSRVRISSSTPVVEDTQSWQASLFT.

Residues 23–469 form the GBD/FH3 domain; it reads LPMPEPGELE…EAIQRQSTLE (447 aa). Positions 381–478 form a coiled coil; it reads LLEDAETKNA…EKKIHELEKQ (98 aa). The disordered stretch occupies residues 521–602; the sequence is PSSGPLPPPP…PSAPPLPGTS (82 aa). Pro residues-rich tracts occupy residues 524 to 534, 548 to 576, and 583 to 599; these read GPLPPPPPPLP, ATPP…PLPG, and PAPP…PPLP. Residues 617-1008 form the FH2 domain; the sequence is IKKPIKTKFR…LMEKLLEQEA (392 aa).

Belongs to the formin homology family. Interacts with TCP11L2; this interaction promotes muscle-derived satellite cell (MDSC) migration and differentiation.

It localises to the cytoplasm. In terms of biological role, plays a role in the regulation of cell morphology and cytoskeletal organization. Required in the cortical actin filament dynamics. The sequence is that of Formin-like protein 2 from Bos taurus (Bovine).